We begin with the raw amino-acid sequence, 84 residues long: Large ribosomal subunit protein bL28 (84 aa).

Belongs to the bacterial ribosomal protein bL28 family.

The sequence is that of Large ribosomal subunit protein bL28 from Clostridium perfringens (strain 13 / Type A).